Consider the following 244-residue polypeptide: 1-(5-phosphoribosyl)-5-[(5-phosphoribosylamino)methylideneamino] imidazole-4-carboxamide isomerase (244 aa).

The Proton acceptor role is filled by Asp8. Asp129 serves as the catalytic Proton donor.

Belongs to the HisA/HisF family.

Its subcellular location is the cytoplasm. The catalysed reaction is 1-(5-phospho-beta-D-ribosyl)-5-[(5-phospho-beta-D-ribosylamino)methylideneamino]imidazole-4-carboxamide = 5-[(5-phospho-1-deoxy-D-ribulos-1-ylimino)methylamino]-1-(5-phospho-beta-D-ribosyl)imidazole-4-carboxamide. It functions in the pathway amino-acid biosynthesis; L-histidine biosynthesis; L-histidine from 5-phospho-alpha-D-ribose 1-diphosphate: step 4/9. This is 1-(5-phosphoribosyl)-5-[(5-phosphoribosylamino)methylideneamino] imidazole-4-carboxamide isomerase from Geobacter sulfurreducens (strain ATCC 51573 / DSM 12127 / PCA).